A 617-amino-acid chain; its full sequence is Zinc finger protein 221 (617 aa).

The KRAB domain maps to V30–S100. 3 C2H2-type zinc fingers span residues Y170–H192, H198–H220, and Y226–H248. The segment at F254–H276 adopts a C2H2-type 4; degenerate zinc-finger fold. 11 C2H2-type zinc fingers span residues Y282–H304, F310–H332, F338–H360, Y366–H388, Y394–H416, F422–H444, Y450–H472, Y478–H500, F506–H528, Y534–H556, and Y562–H584.

Belongs to the krueppel C2H2-type zinc-finger protein family.

It localises to the nucleus. Its function is as follows. May be involved in transcriptional regulation. The protein is Zinc finger protein 221 (ZNF221) of Homo sapiens (Human).